The sequence spans 133 residues: Probable mitochondrial pyruvate carrier 2 (133 aa).

3 helical membrane-spanning segments follow: residues 40 to 57 (VFFW…AGLA), 73 to 91 (ALFA…ITPI), and 100 to 116 (FFVM…IAHY).

The protein belongs to the mitochondrial pyruvate carrier (MPC) (TC 2.A.105) family.

The protein resides in the mitochondrion inner membrane. In terms of biological role, may mediate the uptake of pyruvate into mitochondria. The chain is Probable mitochondrial pyruvate carrier 2 from Caenorhabditis elegans.